Reading from the N-terminus, the 803-residue chain is Mastermind-like domain-containing protein 1 (803 aa).

Disordered stretches follow at residues 22-50, 292-374, 420-452, and 486-641; these read NRQE…TGMA, LAAS…APSS, GHLI…QQSF, and QQQQ…PDQS. Positions 296–309 are enriched in polar residues; that stretch reads KQGSATKQGSNRNW. A compositionally biased stretch (pro residues) spans 312-340; sequence LPPPGLSPPYLPVPSPHPPPPQPPPPPFS. Positions 347–362 are enriched in low complexity; sequence SCMSSSSLSGSAVQSS. Polar residues-rich tracts occupy residues 363–374, 441–452, 495–526, and 547–564; these read PNALLSSMAPSS, NLSSPGLPQQSF, HQAN…SSSP, and PSPQ…QSSL. Low complexity predominate over residues 571 to 588; the sequence is ATPAHAPSATASSTATAT. Residues 592 to 622 are compositionally biased toward basic residues; it reads QHHHQQHHHQQHHHQQQHHQQQHHQQHHHQQ. Residues 623–641 show a composition bias toward low complexity; that stretch reads QQHQQQQHQQQQQQQPDQS.

This sequence belongs to the mastermind family.

It is found in the nucleus. Functionally, transactivates the HES3 promoter independently of NOTCH proteins. HES3 is a non-canonical NOTCH target gene which lacks binding sites for RBPJ. Required for testosterone production. This is Mastermind-like domain-containing protein 1 (Mamld1) from Mus musculus (Mouse).